The chain runs to 274 residues: 2,3,4,5-tetrahydropyridine-2,6-dicarboxylate N-succinyltransferase (274 aa).

2 residues coordinate substrate: Arg103 and Asp140.

The protein belongs to the transferase hexapeptide repeat family. In terms of assembly, homotrimer.

It localises to the cytoplasm. The enzyme catalyses (S)-2,3,4,5-tetrahydrodipicolinate + succinyl-CoA + H2O = (S)-2-succinylamino-6-oxoheptanedioate + CoA. It functions in the pathway amino-acid biosynthesis; L-lysine biosynthesis via DAP pathway; LL-2,6-diaminopimelate from (S)-tetrahydrodipicolinate (succinylase route): step 1/3. This Pasteurella multocida (strain Pm70) protein is 2,3,4,5-tetrahydropyridine-2,6-dicarboxylate N-succinyltransferase.